The primary structure comprises 783 residues: Metabotropic glutamate receptor-like protein J (783 aa).

Positions 1–20 (MKILLYIAIILSFFSLITIS) are cleaved as a signal peptide. Residues 21-383 (SECKIAVLLS…DYPNSLKYGV (363 aa)) lie on the Extracellular side of the membrane. Positions 56–85 (DFSIYYENLEESMEEAEKAFQDALHKGANL) form a coiled coil. Residues asparagine 181, asparagine 196, asparagine 256, asparagine 282, and asparagine 315 are each glycosylated (N-linked (GlcNAc...) asparagine). Residues 384–404 (TIVSGVCIFICLVCMTLVVVF) traverse the membrane as a helical segment. Residues 405-415 (KKARVIKSSSP) are Cytoplasmic-facing. Residues 416-436 (AFLLLILLGCCIIFAACILFA) traverse the membrane as a helical segment. Over 437-443 (QSPTNQT) the chain is Extracellular. Asparagine 441 is a glycosylation site (N-linked (GlcNAc...) asparagine). The chain crosses the membrane as a helical span at residues 444-464 (CSARIWLLSLGYTLFLGNLLV). Over 465–489 (KNWRIWLLFDNPKLKKRAITNWKLY) the chain is Cytoplasmic. Residues 490-510 (PWVFAILAIDVMILAIWQGLG) form a helical membrane-spanning segment. The Extracellular segment spans residues 511 to 538 (NINAESRIGYDSLTQYQYKNVCSSDDQG). The chain crosses the membrane as a helical span at residues 539 to 559 (SIALYLLLVFHGLVLLVACFI). Residues 560–575 (SFKIKVVDIEEFNESK) are Cytoplasmic-facing. Residues 576 to 596 (PITTSVYIITFCLFIVIPLMV) form a helical membrane-spanning segment. At 597–604 (SPQSLTSQ) the chain is on the extracellular side. Residues 605 to 625 (TTIICVCAIVTTLISMLLLFG) traverse the membrane as a helical segment. The Cytoplasmic portion of the chain corresponds to 626 to 783 (SKFYKMATQG…GETEIDSNNV (158 aa)). The segment covering 647–656 (KSSSKSSKSS) has biased composition (low complexity). Disordered stretches follow at residues 647 to 696 (KSSS…FSNK) and 731 to 783 (QLQQ…SNNV). Residues 670 to 679 (GEDDTSDETS) are compositionally biased toward acidic residues. Polar residues predominate over residues 763 to 783 (VLSKRISNQQNGETEIDSNNV).

The protein in the N-terminal section; belongs to the BMP lipoprotein family. In the C-terminal section; belongs to the G-protein coupled receptor 3 family. GABA-B receptor subfamily.

The protein localises to the cell membrane. The protein resides in the membrane. Its subcellular location is the endoplasmic reticulum membrane. It localises to the golgi apparatus membrane. It is found in the nucleus envelope. In terms of biological role, may act during the development and be a negative regulator. The sequence is that of Metabotropic glutamate receptor-like protein J (grlJ) from Dictyostelium discoideum (Social amoeba).